We begin with the raw amino-acid sequence, 818 residues long: Exchange factor for Arf-6 (818 aa).

4 disordered regions span residues 92–123 (AQKL…ESSP), 137–168 (MEST…ENDD), 208–291 (NHHH…GVSN), and 326–383 (RTTP…VGGE). Over residues 107–119 (IERRGSLARKTSE) the composition is skewed to basic and acidic residues. Acidic residues predominate over residues 140–149 (TDVEESEEET). The span at 154–165 (TDEKENQKKPNE) shows a compositional bias: basic and acidic residues. Composition is skewed to polar residues over residues 213–223 (YNSSPQISTLS) and 255–269 (MSNN…SPEN). Over residues 326–347 (RTTPNTAASNSSASASPSLHAT) the composition is skewed to low complexity. Residues 356–532 (GVSLRSAESS…KTLFQSIKDN (177 aa)) form the SEC7 domain. The span at 361–380 (SAESSNLNQTAVPSTSTNSV) shows a compositional bias: polar residues. Residues 569–681 (VEYYSGFLMR…WCEKINFVAA (113 aa)) form the PH domain. A compositionally biased stretch (polar residues) spans 782 to 799 (TMNIMMTPTRRQQQNQKP). The segment at 782-818 (TMNIMMTPTRRQQQNQKPVVSEDRLSYTDAVNGAAAH) is disordered.

Interacts (via short N-terminal region) with microtubule-associated proteins tac-1 and zyg-8.

Its subcellular location is the cytoplasm. The protein resides in the cell cortex. The protein localises to the cell membrane. Guanine nucleotide exchange factor for arf-6. Involved in response to injury in mechanosensory neurons. Inhibits axon regrowth via microtubule dynamics, possibly by inducing axonal microtubule catastrophes. Limits microtubule growth near the cellular cortex of early embryonic cells. This chain is Exchange factor for Arf-6, found in Caenorhabditis elegans.